A 124-amino-acid polypeptide reads, in one-letter code: Small ribosomal subunit protein uS12 (124 aa).

Residue Asp89 is modified to 3-methylthioaspartic acid.

It belongs to the universal ribosomal protein uS12 family. Part of the 30S ribosomal subunit. Contacts proteins S8 and S17. May interact with IF1 in the 30S initiation complex.

In terms of biological role, with S4 and S5 plays an important role in translational accuracy. Interacts with and stabilizes bases of the 16S rRNA that are involved in tRNA selection in the A site and with the mRNA backbone. Located at the interface of the 30S and 50S subunits, it traverses the body of the 30S subunit contacting proteins on the other side and probably holding the rRNA structure together. The combined cluster of proteins S8, S12 and S17 appears to hold together the shoulder and platform of the 30S subunit. This Haemophilus ducreyi (strain 35000HP / ATCC 700724) protein is Small ribosomal subunit protein uS12.